We begin with the raw amino-acid sequence, 178 residues long: Large ribosomal subunit protein uL6 (178 aa).

Belongs to the universal ribosomal protein uL6 family. Part of the 50S ribosomal subunit.

Functionally, this protein binds to the 23S rRNA, and is important in its secondary structure. It is located near the subunit interface in the base of the L7/L12 stalk, and near the tRNA binding site of the peptidyltransferase center. The protein is Large ribosomal subunit protein uL6 of Streptococcus pneumoniae serotype 4 (strain ATCC BAA-334 / TIGR4).